Here is a 140-residue protein sequence, read N- to C-terminus: MAKKITGYIKLQVPAGKANPAPPIGPALGQHGVNIMEFCKAFNAKTQADEGTITPVVITVYADRSFTFITKTPPVPVLIKKAAGIASGSAVPNKTKVGKLTKAQVEEIAKTKMPDLNAASLEAAMRTVEGTARSMGVDIV.

Belongs to the universal ribosomal protein uL11 family. As to quaternary structure, part of the ribosomal stalk of the 50S ribosomal subunit. Interacts with L10 and the large rRNA to form the base of the stalk. L10 forms an elongated spine to which L12 dimers bind in a sequential fashion forming a multimeric L10(L12)X complex. One or more lysine residues are methylated.

Forms part of the ribosomal stalk which helps the ribosome interact with GTP-bound translation factors. This chain is Large ribosomal subunit protein uL11, found in Pelobacter propionicus (strain DSM 2379 / NBRC 103807 / OttBd1).